The chain runs to 233 residues: Large ribosomal subunit protein uL1 (233 aa).

The protein belongs to the universal ribosomal protein uL1 family. In terms of assembly, part of the 50S ribosomal subunit.

Its function is as follows. Binds directly to 23S rRNA. The L1 stalk is quite mobile in the ribosome, and is involved in E site tRNA release. Functionally, protein L1 is also a translational repressor protein, it controls the translation of the L11 operon by binding to its mRNA. This is Large ribosomal subunit protein uL1 from Vibrio parahaemolyticus serotype O3:K6 (strain RIMD 2210633).